Reading from the N-terminus, the 505-residue chain is Glycerol kinase (505 aa).

Threonine 14 provides a ligand contact to ADP. ATP contacts are provided by threonine 14, threonine 15, and serine 16. Threonine 14 serves as a coordination point for sn-glycerol 3-phosphate. Arginine 18 serves as a coordination point for ADP. Residues arginine 84, glutamate 85, tyrosine 136, and aspartate 246 each contribute to the sn-glycerol 3-phosphate site. Arginine 84, glutamate 85, tyrosine 136, aspartate 246, and glutamine 247 together coordinate glycerol. ADP-binding residues include threonine 268 and glycine 311. Threonine 268, glycine 311, glutamine 315, and glycine 412 together coordinate ATP. The ADP site is built by glycine 412 and asparagine 416.

This sequence belongs to the FGGY kinase family.

The enzyme catalyses glycerol + ATP = sn-glycerol 3-phosphate + ADP + H(+). The protein operates within polyol metabolism; glycerol degradation via glycerol kinase pathway; sn-glycerol 3-phosphate from glycerol: step 1/1. Its activity is regulated as follows. Inhibited by fructose 1,6-bisphosphate (FBP). Key enzyme in the regulation of glycerol uptake and metabolism. Catalyzes the phosphorylation of glycerol to yield sn-glycerol 3-phosphate. This is Glycerol kinase from Vibrio parahaemolyticus serotype O3:K6 (strain RIMD 2210633).